Here is a 192-residue protein sequence, read N- to C-terminus: Elongation factor P (192 aa).

It belongs to the elongation factor P family.

Its subcellular location is the cytoplasm. The protein operates within protein biosynthesis; polypeptide chain elongation. In terms of biological role, involved in peptide bond synthesis. Stimulates efficient translation and peptide-bond synthesis on native or reconstituted 70S ribosomes in vitro. Probably functions indirectly by altering the affinity of the ribosome for aminoacyl-tRNA, thus increasing their reactivity as acceptors for peptidyl transferase. This is Elongation factor P from Borrelia recurrentis (strain A1).